Consider the following 203-residue polypeptide: MIGIIDYGMGNLRSVEKALKYVGYDAKITSDAKEIKNFEALILPGVGAFPDAIRVLIKTGMAEEIKIHIEKGKPFLGICLGMQLLFEKSFEGGKTEGLKIFKGNVVGLPKGNKIPHVGWNSLTIKKDTPFLKGIKNGDYVYFVHSYYVNGNEKDFEYAVTEYGIEIPAVIIKDNVFSCQFHPEKSGETGLKILKNFGEMIKCL.

Residues Met1 to Leu203 form the Glutamine amidotransferase type-1 domain. Residue Cys79 is the Nucleophile of the active site. Active-site residues include His181 and Glu183.

As to quaternary structure, heterodimer of HisH and HisF.

It is found in the cytoplasm. It catalyses the reaction 5-[(5-phospho-1-deoxy-D-ribulos-1-ylimino)methylamino]-1-(5-phospho-beta-D-ribosyl)imidazole-4-carboxamide + L-glutamine = D-erythro-1-(imidazol-4-yl)glycerol 3-phosphate + 5-amino-1-(5-phospho-beta-D-ribosyl)imidazole-4-carboxamide + L-glutamate + H(+). The catalysed reaction is L-glutamine + H2O = L-glutamate + NH4(+). It participates in amino-acid biosynthesis; L-histidine biosynthesis; L-histidine from 5-phospho-alpha-D-ribose 1-diphosphate: step 5/9. IGPS catalyzes the conversion of PRFAR and glutamine to IGP, AICAR and glutamate. The HisH subunit catalyzes the hydrolysis of glutamine to glutamate and ammonia as part of the synthesis of IGP and AICAR. The resulting ammonia molecule is channeled to the active site of HisF. The chain is Imidazole glycerol phosphate synthase subunit HisH from Caldanaerobacter subterraneus subsp. tengcongensis (strain DSM 15242 / JCM 11007 / NBRC 100824 / MB4) (Thermoanaerobacter tengcongensis).